We begin with the raw amino-acid sequence, 227 residues long: Cytochrome c oxidase subunit 2 (227 aa).

The Mitochondrial intermembrane portion of the chain corresponds to 1 to 14 (MAHPAQLGLQDATS). Residues 15–45 (PVMEELITFHDHALMAMSLISLLVLYALFST) traverse the membrane as a helical segment. The Mitochondrial matrix segment spans residues 46 to 59 (LTTKMTNTNITDAQ). The chain crosses the membrane as a helical span at residues 60 to 87 (EMETIWTILPAIILVLIAFPSLRILYMT). Residues 88-227 (DEVNNPSFTI…IFEMGPVFTL (140 aa)) lie on the Mitochondrial intermembrane side of the membrane. Cu cation is bound by residues H161, C196, E198, C200, H204, and M207. Mg(2+) is bound at residue E198.

Belongs to the cytochrome c oxidase subunit 2 family. As to quaternary structure, component of the cytochrome c oxidase (complex IV, CIV), a multisubunit enzyme composed of 14 subunits. The complex is composed of a catalytic core of 3 subunits MT-CO1, MT-CO2 and MT-CO3, encoded in the mitochondrial DNA, and 11 supernumerary subunits COX4I, COX5A, COX5B, COX6A, COX6B, COX6C, COX7A, COX7B, COX7C, COX8 and NDUFA4, which are encoded in the nuclear genome. The complex exists as a monomer or a dimer and forms supercomplexes (SCs) in the inner mitochondrial membrane with NADH-ubiquinone oxidoreductase (complex I, CI) and ubiquinol-cytochrome c oxidoreductase (cytochrome b-c1 complex, complex III, CIII), resulting in different assemblies (supercomplex SCI(1)III(2)IV(1) and megacomplex MCI(2)III(2)IV(2)). Found in a complex with TMEM177, COA6, COX18, COX20, SCO1 and SCO2. Interacts with TMEM177 in a COX20-dependent manner. Interacts with COX20. Interacts with COX16. Cu cation serves as cofactor.

It localises to the mitochondrion inner membrane. It carries out the reaction 4 Fe(II)-[cytochrome c] + O2 + 8 H(+)(in) = 4 Fe(III)-[cytochrome c] + 2 H2O + 4 H(+)(out). Functionally, component of the cytochrome c oxidase, the last enzyme in the mitochondrial electron transport chain which drives oxidative phosphorylation. The respiratory chain contains 3 multisubunit complexes succinate dehydrogenase (complex II, CII), ubiquinol-cytochrome c oxidoreductase (cytochrome b-c1 complex, complex III, CIII) and cytochrome c oxidase (complex IV, CIV), that cooperate to transfer electrons derived from NADH and succinate to molecular oxygen, creating an electrochemical gradient over the inner membrane that drives transmembrane transport and the ATP synthase. Cytochrome c oxidase is the component of the respiratory chain that catalyzes the reduction of oxygen to water. Electrons originating from reduced cytochrome c in the intermembrane space (IMS) are transferred via the dinuclear copper A center (CU(A)) of subunit 2 and heme A of subunit 1 to the active site in subunit 1, a binuclear center (BNC) formed by heme A3 and copper B (CU(B)). The BNC reduces molecular oxygen to 2 water molecules using 4 electrons from cytochrome c in the IMS and 4 protons from the mitochondrial matrix. The protein is Cytochrome c oxidase subunit 2 (MT-CO2) of Mandrillus leucophaeus (Drill).